We begin with the raw amino-acid sequence, 254 residues long: Alcohol dehydrogenase 1 (254 aa).

Residue 10–33 (FVAGLGGIGFDTSREIVKSGPKNL) coordinates NAD(+). Serine 138 is a binding site for substrate. Tyrosine 151 acts as the Proton acceptor in catalysis.

This sequence belongs to the short-chain dehydrogenases/reductases (SDR) family. In terms of assembly, homodimer.

The enzyme catalyses a primary alcohol + NAD(+) = an aldehyde + NADH + H(+). It carries out the reaction a secondary alcohol + NAD(+) = a ketone + NADH + H(+). The sequence is that of Alcohol dehydrogenase 1 (Adh1) from Drosophila mulleri (Fruit fly).